The primary structure comprises 154 residues: Metallothiol transferase FosB (154 aa).

Residues 8 to 123 form the VOC domain; that stretch reads GINHLLFSVS…DGHKFELHTG (116 aa). The Mg(2+) site is built by histidine 11, histidine 70, and glutamate 119. Residue glutamate 119 is the Proton donor/acceptor of the active site.

Belongs to the fosfomycin resistance protein family. FosB subfamily. In terms of assembly, homodimer. Requires Mg(2+) as cofactor.

It is found in the cytoplasm. Functionally, metallothiol transferase which confers resistance to fosfomycin by catalyzing the addition of a thiol cofactor to fosfomycin. L-cysteine is probably the physiological thiol donor. This chain is Metallothiol transferase FosB, found in Bacillus licheniformis (strain ATCC 14580 / DSM 13 / JCM 2505 / CCUG 7422 / NBRC 12200 / NCIMB 9375 / NCTC 10341 / NRRL NRS-1264 / Gibson 46).